We begin with the raw amino-acid sequence, 392 residues long: MVDLPTTTPPAQPTTGNDEVDALHPLKPYRSLENEVLQQRIEAVRQELGDELLILGHHYQQDEVIEHTDLRGDSYQLSEMAAKSQACRTIVFCGVHFMAETADILANRPDRIEARDGRRVDVLLPDMAAGCSMADMAAIAQVEAAWADMSEVIDTEQVIPVTYINSAASLKAFCGRHGGIVCTSSNARAVLEWAFERGQRVFFFPDQHLGRNTALTMDITEEQMPVWDPYALEMGGNTDEQIQSSRVILWKGHCSVHQMFRAEHVDRFRKEHPGIKILVHPECPREVNDIADVSGSTGKIIQTIKNSPAGTKWAIGTELHLVNRLKDEHPEQEIHFLSPVVCMCATMYRIDLTHLCWTLENLRDGRLVNQIRVDEETTKWSLIALERMLAVK.

Residues 1 to 23 (MVDLPTTTPPAQPTTGNDEVDAL) are disordered. The iminosuccinate site is built by histidine 57 and serine 74. Cysteine 131 is a [4Fe-4S] cluster binding site. Residues 163–165 (YIN) and serine 184 each bind iminosuccinate. Cysteine 254 contacts [4Fe-4S] cluster. Residues 280–282 (HPE) and threonine 297 contribute to the iminosuccinate site. Cysteine 344 is a [4Fe-4S] cluster binding site.

It belongs to the quinolinate synthase family. Type 3 subfamily. [4Fe-4S] cluster serves as cofactor.

Its subcellular location is the cytoplasm. The catalysed reaction is iminosuccinate + dihydroxyacetone phosphate = quinolinate + phosphate + 2 H2O + H(+). Its pathway is cofactor biosynthesis; NAD(+) biosynthesis; quinolinate from iminoaspartate: step 1/1. Functionally, catalyzes the condensation of iminoaspartate with dihydroxyacetone phosphate to form quinolinate. This is Quinolinate synthase from Rhodopirellula baltica (strain DSM 10527 / NCIMB 13988 / SH1).